A 367-amino-acid polypeptide reads, in one-letter code: Ganglioside-induced differentiation-associated protein 1-like 1 (367 aa).

The GST N-terminal domain maps to 45–126; that stretch reads ESLVLYHWTQ…YVERTFTGEH (82 aa). One can recognise a GST C-terminal domain in the interval 174 to 341; the sequence is PKYATAEIRR…RLVKRKPPSF (168 aa).

Belongs to the GST superfamily.

In Homo sapiens (Human), this protein is Ganglioside-induced differentiation-associated protein 1-like 1 (GDAP1L1).